We begin with the raw amino-acid sequence, 253 residues long: Phosphoadenosine 5'-phosphosulfate reductase (253 aa).

C242 acts as the Nucleophile; cysteine thiosulfonate intermediate in catalysis.

The protein belongs to the PAPS reductase family. CysH subfamily.

The protein resides in the cytoplasm. The catalysed reaction is [thioredoxin]-disulfide + sulfite + adenosine 3',5'-bisphosphate + 2 H(+) = [thioredoxin]-dithiol + 3'-phosphoadenylyl sulfate. The protein operates within sulfur metabolism; hydrogen sulfide biosynthesis; sulfite from sulfate: step 3/3. Functionally, catalyzes the formation of sulfite from phosphoadenosine 5'-phosphosulfate (PAPS) using thioredoxin as an electron donor. The sequence is that of Phosphoadenosine 5'-phosphosulfate reductase from Vibrio cholerae serotype O1 (strain ATCC 39541 / Classical Ogawa 395 / O395).